A 152-amino-acid polypeptide reads, in one-letter code: Large ribosomal subunit protein uL13 (152 aa).

The protein belongs to the universal ribosomal protein uL13 family. Part of the 50S ribosomal subunit.

Its function is as follows. This protein is one of the early assembly proteins of the 50S ribosomal subunit, although it is not seen to bind rRNA by itself. It is important during the early stages of 50S assembly. This chain is Large ribosomal subunit protein uL13, found in Wolbachia sp. subsp. Drosophila simulans (strain wRi).